Consider the following 330-residue polypeptide: Anthranilate phosphoribosyltransferase (330 aa).

5-phospho-alpha-D-ribose 1-diphosphate is bound by residues Gly-79, 82 to 83 (GD), Thr-87, 89 to 92 (NIST), 107 to 115 (KHGNYGVSS), and Ser-119. Gly-79 contributes to the anthranilate binding site. Ser-91 contacts Mg(2+). Asn-110 contributes to the anthranilate binding site. Position 165 (Arg-165) interacts with anthranilate. Residues Asp-223 and Glu-224 each coordinate Mg(2+).

The protein belongs to the anthranilate phosphoribosyltransferase family. Homodimer. Requires Mg(2+) as cofactor.

The catalysed reaction is N-(5-phospho-beta-D-ribosyl)anthranilate + diphosphate = 5-phospho-alpha-D-ribose 1-diphosphate + anthranilate. Its pathway is amino-acid biosynthesis; L-tryptophan biosynthesis; L-tryptophan from chorismate: step 2/5. Functionally, catalyzes the transfer of the phosphoribosyl group of 5-phosphorylribose-1-pyrophosphate (PRPP) to anthranilate to yield N-(5'-phosphoribosyl)-anthranilate (PRA). This Flavobacterium johnsoniae (strain ATCC 17061 / DSM 2064 / JCM 8514 / BCRC 14874 / CCUG 350202 / NBRC 14942 / NCIMB 11054 / UW101) (Cytophaga johnsonae) protein is Anthranilate phosphoribosyltransferase.